A 265-amino-acid polypeptide reads, in one-letter code: Mycothiol acetyltransferase (265 aa).

N-acetyltransferase domains are found at residues 1–110 (MDDL…PPLP) and 118–265 (VSVR…YVRG). Residue Asp3 coordinates 1D-myo-inositol 2-(L-cysteinylamino)-2-deoxy-alpha-D-glucopyranoside. 44-46 (VQV) is an acetyl-CoA binding site. Residues Glu145, Arg185, and Glu198 each contribute to the 1D-myo-inositol 2-(L-cysteinylamino)-2-deoxy-alpha-D-glucopyranoside site. Acetyl-CoA contacts are provided by residues 202–204 (LGV) and 209–215 (HCKGLGK). Residue Tyr236 participates in 1D-myo-inositol 2-(L-cysteinylamino)-2-deoxy-alpha-D-glucopyranoside binding.

The protein belongs to the acetyltransferase family. MshD subfamily. As to quaternary structure, monomer.

It carries out the reaction 1D-myo-inositol 2-(L-cysteinylamino)-2-deoxy-alpha-D-glucopyranoside + acetyl-CoA = mycothiol + CoA + H(+). Catalyzes the transfer of acetyl from acetyl-CoA to desacetylmycothiol (Cys-GlcN-Ins) to form mycothiol. The protein is Mycothiol acetyltransferase of Segniliparus rotundus (strain ATCC BAA-972 / CDC 1076 / CIP 108378 / DSM 44985 / JCM 13578).